The following is a 443-amino-acid chain: MESLAALYKNHIVTLQERTRDVLARFQMDALLIHSGELVNVFLDDHPYPFKVNPQFKAWVPVTQVPNCWLLVDGVNKPKLWFYLPVDYWHNVEPLPTSFWTEEIDVIALPKADGIGSQLPAARGNIGYIGPVPERALGLGIAADKINPKGVIDYLHYYRAYKTDYELACMREAQKSAVNGHRAAYEAFQSGMSEFDINQAYLTATGHRDTDVPYSNIVALNEHASVLHYTKLDHRAPAEMRSFLLDAGAEYNGYAADLTRTWAAHGDNDFAHLIKDVNDEQLALISTMKAGTSYIDYHIQFHQRIAKLLRKHQLVTDMSEEAMVENDLTGPFMPHGIGHPLGLQVHDVAGFMQDDTGTHLAAPSKYPYLRCTRIIEPRMVLTIEPGIYFIESLLAPWREGPFSKHFNWQKIDAMKPFGGIRIEDNVVIHENSIENMTRDLKLA.

Mn(2+)-binding residues include Asp-246, Asp-257, His-339, Glu-384, and Glu-423.

It belongs to the peptidase M24B family. Bacterial-type prolidase subfamily. Mn(2+) is required as a cofactor.

The catalysed reaction is Xaa-L-Pro dipeptide + H2O = an L-alpha-amino acid + L-proline. Its function is as follows. Splits dipeptides with a prolyl residue in the C-terminal position. In Klebsiella pneumoniae subsp. pneumoniae (strain ATCC 700721 / MGH 78578), this protein is Xaa-Pro dipeptidase.